A 78-amino-acid chain; its full sequence is MKSATLLALSYLLIALYFLICEAEHSRYEEHEILEENMGDVVNLEQRSCAKPGEMCMRIKCCDGQCGCNRGTGRCFCK.

The N-terminal stretch at methionine 1–alanine 23 is a signal peptide. Positions glutamate 24–arginine 47 are excised as a propeptide. 3 cysteine pairs are disulfide-bonded: cysteine 49/cysteine 62, cysteine 56/cysteine 66, and cysteine 61/cysteine 77.

This sequence belongs to the hainantoxin family. 20 subfamily. In terms of tissue distribution, expressed by the venom gland.

Its subcellular location is the secreted. Functionally, moderately inhibits Kv1.1/KCNA1 and Kv1.2/KCNA2 and weakly inhibits Kv1.3/KCNA3, and Kv2.1/KCNB1 voltage-gated potassium channels. This is Hainantoxin-XX.2 from Cyriopagopus hainanus (Chinese bird spider).